The primary structure comprises 209 residues: V-type ATP synthase subunit D (209 aa).

Belongs to the V-ATPase D subunit family.

Functionally, produces ATP from ADP in the presence of a proton gradient across the membrane. This chain is V-type ATP synthase subunit D, found in Thermoanaerobacter pseudethanolicus (strain ATCC 33223 / 39E) (Clostridium thermohydrosulfuricum).